Here is a 541-residue protein sequence, read N- to C-terminus: Atlastin-3 (541 aa).

Positions Met1 to Gly22 are disordered. The tract at residues Met1–Gly25 is N-terminal hypervariable region (HVR). The Cytoplasmic segment spans residues Met1–Ala445. One can recognise a GB1/RHD3-type G domain in the interval Asp57 to Lys306. Arg70, Lys71, Gly72, Lys73, Ser74, Phe75, and Arg109 together coordinate GDP. Asp142 contacts Mg(2+). GDP-binding residues include Arg213, Asp214, Val272, and Ser275. The 3HB (three-helix bundle) domain stretch occupies residues Met344–Ser434. Residue Lys391 is modified to N6-acetyllysine. Residues Val446 to Leu466 traverse the membrane as a helical segment. Residue Glu467 is a topological domain, lumenal. The chain crosses the membrane as a helical span at residues Val468–Gly488. Residues Tyr489 to Gln541 lie on the Cytoplasmic side of the membrane.

This sequence belongs to the TRAFAC class dynamin-like GTPase superfamily. GB1/RHD3 GTPase family. GB1 subfamily. In terms of assembly, monomeric and homodimeric. The homodimer, transiently formed by two molecules on opposing membranes, is the active form mediating ER membrane fusion. Interacts with ZFYVE27; both proteins are involved in endoplasmic reticulum tubular network organization. Interacts with REEP5; both proteins are involved in endoplasmic reticulum tubular network organization.

The protein localises to the endoplasmic reticulum membrane. It catalyses the reaction GTP + H2O = GDP + phosphate + H(+). Its function is as follows. Atlastin-3 (ATL3) is a membrane-anchored GTPase that mediates the GTP-dependent fusion of endoplasmic reticulum (ER) membranes, maintaining the continuous ER network. It facilitates the formation of three-way junctions where ER tubules intersect. Two atlastin-3 on neighboring ER tubules bind GTP and form loose homodimers through the GB1/RHD3-type G domains and 3HB regions. Upon GTP hydrolysis, the 3HB regions tighten, pulling the membranes together to drive their fusion. After fusion, the homodimer disassembles upon release of inorganic phosphate (Pi). Subsequently, GDP dissociates, resetting the monomers to a conformation ready for a new fusion cycle. The chain is Atlastin-3 from Rattus norvegicus (Rat).